A 430-amino-acid chain; its full sequence is Tyrosine--tRNA ligase (430 aa).

Tyr32 is a binding site for L-tyrosine. Residues 37–46 carry the 'HIGH' region motif; sequence PTADSLHIGH. Residues Tyr172 and Gln176 each contribute to the L-tyrosine site. The 'KMSKS' region motif lies at 232–236; sequence KFGKT. Residue Lys235 coordinates ATP. Positions 362 to 429 constitute an S4 RNA-binding domain; it reads IKAVDLCTEK…GKKNYYLLIA (68 aa).

The protein belongs to the class-I aminoacyl-tRNA synthetase family. TyrS type 1 subfamily. As to quaternary structure, homodimer.

It is found in the cytoplasm. The catalysed reaction is tRNA(Tyr) + L-tyrosine + ATP = L-tyrosyl-tRNA(Tyr) + AMP + diphosphate + H(+). Catalyzes the attachment of tyrosine to tRNA(Tyr) in a two-step reaction: tyrosine is first activated by ATP to form Tyr-AMP and then transferred to the acceptor end of tRNA(Tyr). The sequence is that of Tyrosine--tRNA ligase from Parabacteroides distasonis (strain ATCC 8503 / DSM 20701 / CIP 104284 / JCM 5825 / NCTC 11152).